The following is a 457-amino-acid chain: Siroheme synthase 2 (457 aa).

Residues 1-204 form a precorrin-2 dehydrogenase /sirohydrochlorin ferrochelatase region; the sequence is MDHLPIFCQL…DDEQAVTRIT (204 aa). NAD(+)-binding positions include 22 to 23 and 43 to 44; these read DV and LA. Phosphoserine is present on serine 128. A uroporphyrinogen-III C-methyltransferase region spans residues 216 to 457; that stretch reads GEVVLVGAGP…RDKLNWFSSK (242 aa). Residue proline 225 participates in S-adenosyl-L-methionine binding. Aspartate 248 acts as the Proton acceptor in catalysis. Lysine 270 (proton donor) is an active-site residue. S-adenosyl-L-methionine-binding positions include 301-303, isoleucine 306, 331-332, methionine 382, and glycine 411; these read GGD and TA.

In the N-terminal section; belongs to the precorrin-2 dehydrogenase / sirohydrochlorin ferrochelatase family. This sequence in the C-terminal section; belongs to the precorrin methyltransferase family.

The enzyme catalyses uroporphyrinogen III + 2 S-adenosyl-L-methionine = precorrin-2 + 2 S-adenosyl-L-homocysteine + H(+). It catalyses the reaction precorrin-2 + NAD(+) = sirohydrochlorin + NADH + 2 H(+). The catalysed reaction is siroheme + 2 H(+) = sirohydrochlorin + Fe(2+). It participates in cofactor biosynthesis; adenosylcobalamin biosynthesis; precorrin-2 from uroporphyrinogen III: step 1/1. It functions in the pathway cofactor biosynthesis; adenosylcobalamin biosynthesis; sirohydrochlorin from precorrin-2: step 1/1. The protein operates within porphyrin-containing compound metabolism; siroheme biosynthesis; precorrin-2 from uroporphyrinogen III: step 1/1. Its pathway is porphyrin-containing compound metabolism; siroheme biosynthesis; siroheme from sirohydrochlorin: step 1/1. It participates in porphyrin-containing compound metabolism; siroheme biosynthesis; sirohydrochlorin from precorrin-2: step 1/1. Its function is as follows. Multifunctional enzyme that catalyzes the SAM-dependent methylations of uroporphyrinogen III at position C-2 and C-7 to form precorrin-2 via precorrin-1. Then it catalyzes the NAD-dependent ring dehydrogenation of precorrin-2 to yield sirohydrochlorin. Finally, it catalyzes the ferrochelation of sirohydrochlorin to yield siroheme. The polypeptide is Siroheme synthase 2 (Cronobacter sakazakii (strain ATCC BAA-894) (Enterobacter sakazakii)).